Reading from the N-terminus, the 264-residue chain is MSHRADEIRKRLEKRRKQLSGSKRFSTQTVSEKQKPPSWVMVTDQEKHGTLPVYEDNMPTFNGKHPLVKTDSIILKCLLSACLVLVSAIAYKTNIGPVSQIKPAVAKTFETEFQFASASHWFETKFGNPLAFLAPEHKNKEQQIEVGKDLIAPASGKVQQDFQDNGEGIKVETSSDKIDSVKEGYVVEVSKDSQTGLTVKVQHADNTYSIYGELKDVDVALYDFVDKGKKLGSIKLDDHNKGVYYFAMKDGDKFIDPIQVISFE.

The span at 1 to 10 (MSHRADEIRK) shows a compositional bias: basic and acidic residues. The tract at residues 1 to 37 (MSHRADEIRKRLEKRRKQLSGSKRFSTQTVSEKQKPP) is disordered. Residues 1–72 (MSHRADEIRK…GKHPLVKTDS (72 aa)) are Mother cell cytoplasmic-facing. The segment covering 19–31 (LSGSKRFSTQTVS) has biased composition (polar residues). The helical transmembrane segment at 73–90 (IILKCLLSACLVLVSAIA) threads the bilayer. Residues 91 to 264 (YKTNIGPVSQ…IDPIQVISFE (174 aa)) lie on the Forespore intermembrane space side of the membrane.

As to quaternary structure, forms a complex with BofA and SpoIVFB localized in the mother-cell membrane surrounding the forespore. May be degraded by FtsH. It is stabilized by an ftsH disruption mutant, and in a probably independent fashion, by overexpression of BofA.

It is found in the forespore outer membrane. In terms of biological role, implicated in the coupling of mother cell to forespore gene expression. Required for spore formation at 37 degrees Celsius, but not at 30 degrees Celsius. SpoIVFA plays a central role in both maintaining the SpoIVFA/BofA/SpoIVFB complex and anchoring it to the outer forespore membrane. SpoIVFA brings BofA into close proximity to SpoIVFB, allowing BofA to inhibit SpoIVFB. Increased accumulation of SpoIVFA seems to inhibit the activity of SpoIVFB and thus regulates the activation of sigma-K. The polypeptide is Stage IV sporulation protein FA (spoIVFA) (Bacillus subtilis (strain 168)).